Consider the following 286-residue polypeptide: ATP synthase gamma chain (286 aa).

Belongs to the ATPase gamma chain family. In terms of assembly, F-type ATPases have 2 components, CF(1) - the catalytic core - and CF(0) - the membrane proton channel. CF(1) has five subunits: alpha(3), beta(3), gamma(1), delta(1), epsilon(1). CF(0) has three main subunits: a, b and c.

The protein localises to the cell inner membrane. Its function is as follows. Produces ATP from ADP in the presence of a proton gradient across the membrane. The gamma chain is believed to be important in regulating ATPase activity and the flow of protons through the CF(0) complex. The polypeptide is ATP synthase gamma chain (Pseudoalteromonas atlantica (strain T6c / ATCC BAA-1087)).